Consider the following 407-residue polypeptide: Phosphoglycerate kinase (407 aa).

Substrate is bound by residues D24–N26, R39, H60–R63, R117, and R157. ATP contacts are provided by residues E330 and G355–I358.

It belongs to the phosphoglycerate kinase family.

Its subcellular location is the cytoplasm. It carries out the reaction (2R)-3-phosphoglycerate + ATP = (2R)-3-phospho-glyceroyl phosphate + ADP. It functions in the pathway carbohydrate degradation; glycolysis; pyruvate from D-glyceraldehyde 3-phosphate: step 2/5. The polypeptide is Phosphoglycerate kinase (pgk) (Archaeoglobus fulgidus (strain ATCC 49558 / DSM 4304 / JCM 9628 / NBRC 100126 / VC-16)).